The following is a 597-amino-acid chain: Sodium/mannose cotransporter SLC5A10 (597 aa).

Topologically, residues 1–16 are extracellular; sequence MVADNSTSDPHAPGPQ. Asn5 carries N-linked (GlcNAc...) asparagine glycosylation. Residues 17–37 traverse the membrane as a helical segment; sequence LSVTDIVVITVYFALNVAVGI. Residues 38–73 are Cytoplasmic-facing; sequence WSSCRASRNTVSGYFLAGRDMTWWPIGASLFGSSEG. Ser49 is modified (phosphoserine). Residues 74-94 traverse the membrane as a helical segment; it reads SGLFIGLAGSGAAGGLAVAGF. The Extracellular segment spans residues 95-100; sequence DWNATY. Residues 101 to 121 traverse the membrane as a helical segment; sequence VLLALAWVFGAIYISSEIVTL. The Cytoplasmic segment spans residues 122–137; sequence AEYIQKRFGGQRIRMY. Residues 138-158 form a helical membrane-spanning segment; it reads LSVLSLLLSVFTKISLDLYAG. The Extracellular portion of the chain corresponds to 159-171; it reads ALFVHICLGWNFY. Residues 172-194 traverse the membrane as a helical segment; the sequence is LSTILTLTITALYTITGGLVAVI. Residues 195 to 200 lie on the Cytoplasmic side of the membrane; it reads YTDALQ. A helical transmembrane segment spans residues 201–219; that stretch reads TLIMVVGAVILAIKAFHQI. The Extracellular portion of the chain corresponds to 220-265; the sequence is DGYGQMEAAYARAIPSRTVANTTCHLPRADAMHMFRDPYTGDLPWT. A helical transmembrane segment spans residues 266–286; the sequence is GMTFGLTIMATWYWCTDQVIV. At 287-301 the chain is on the cytoplasmic side; that stretch reads QRSLSARNLNHAKAG. The helical transmembrane segment at 302-322 threads the bilayer; sequence SILASYLKMLPMGLMIMPGMI. The Extracellular portion of the chain corresponds to 323 to 367; it reads SRALFPDEVGCVVPSECLRACGAEIGCSNIAYPKLVMELMPVGLR. A helical membrane pass occupies residues 368-390; sequence GLMIAVMMPALMSSLSSIFNSSS. The Cytoplasmic segment spans residues 391–410; that stretch reads TLFTMDIWRRLRPCASEREL. Residues 411 to 431 traverse the membrane as a helical segment; that stretch reads LLVGRLVIVVLIGVSVAWIPV. Over 432–444 the chain is Extracellular; the sequence is LQGSNGGQLFIYM. Residues 445 to 465 form a helical membrane-spanning segment; the sequence is QSVTSSLAPPVTAVFTLGIFW. The Cytoplasmic segment spans residues 466 to 472; that stretch reads QRANEQG. The helical transmembrane segment at 473–493 threads the bilayer; that stretch reads AFWGLLAGLAVGATRLVLEFL. The Extracellular segment spans residues 494 to 514; sequence HPAPPCGAADTRPAVLSQLHY. The helical transmembrane segment at 515 to 535 threads the bilayer; sequence LHFAVALFVLTGAVAVGGSLL. Residues 536–576 are Cytoplasmic-facing; that stretch reads TPPPRRHQIENLTWWTLTRDLSLGAKAGDGQTPQRYTFWAR. A helical membrane pass occupies residues 577–597; it reads VCGFNAILLMCVNIFFYAYFA.

Belongs to the sodium:solute symporter (SSF) (TC 2.A.21) family. As to expression, expressed only in kidney.

The protein localises to the apical cell membrane. It catalyses the reaction D-mannose(out) + Na(+)(out) = D-mannose(in) + Na(+)(in). The enzyme catalyses D-fructopyranose(out) + Na(+)(out) = D-fructopyranose(in) + Na(+)(in). In terms of biological role, electrogenic Na+-coupled sugar symporter that actively transports D-mannose or D-fructose at the plasma membrane, with a Na+ to sugar coupling ratio of 1:1. Transporter activity is driven by a transmembrane Na+ electrochemical gradient set by the Na+/K+ pump. Exclusively recognizes sugar substrates having a pyranose ring with an axial hydroxyl group on carbon 2. Has likely evolved to enable renal reabsorption of D-mannose, an important constituent of oligosaccharide chains of glycoproteins. Contributes to dietary D-fructose reabsorption from glomerular filtrate across the brush border of the kidney. This is Sodium/mannose cotransporter SLC5A10 (SLC5A10) from Oryctolagus cuniculus (Rabbit).